The primary structure comprises 324 residues: Putative ribose-phosphate pyrophosphokinase 1 (324 aa).

ATP contacts are provided by residues 43-45 and 102-103; these read DGE and RQ. Residue H136 coordinates Mg(2+). D-ribose 5-phosphate is bound by residues D225 and 229-233; that span reads NTGQT.

The protein belongs to the ribose-phosphate pyrophosphokinase family. Class I subfamily. As to quaternary structure, homohexamer. Mg(2+) serves as cofactor.

Its subcellular location is the cytoplasm. It catalyses the reaction D-ribose 5-phosphate + ATP = 5-phospho-alpha-D-ribose 1-diphosphate + AMP + H(+). Its pathway is metabolic intermediate biosynthesis; 5-phospho-alpha-D-ribose 1-diphosphate biosynthesis; 5-phospho-alpha-D-ribose 1-diphosphate from D-ribose 5-phosphate (route I): step 1/1. Its function is as follows. Involved in the biosynthesis of the central metabolite phospho-alpha-D-ribosyl-1-pyrophosphate (PRPP) via the transfer of pyrophosphoryl group from ATP to 1-hydroxyl of ribose-5-phosphate (Rib-5-P). This chain is Putative ribose-phosphate pyrophosphokinase 1, found in Enterococcus faecalis (strain ATCC 700802 / V583).